The sequence spans 348 residues: N-(sulfonatooxy)prop-2-enimidothioate sulfolyase (348 aa).

Kelch repeat units lie at residues 1–33 (MART…VIGD), 34–85 (KLYC…VAVG), 87–133 (KLYV…FHSM), 139–194 (HVYV…VVQG), 209–254 (KIPT…FAHA), 259–314 (YIII…ASTT), and 322–348 (GLLV…NSST). A (Z)-N-(sulfonatooxy)alkanimidothioate is bound by residues Glu-46, Arg-94, Thr-129, Phe-130, and Arg-157. Arg-94 acts as the Proton donor in catalysis. The Proton donor role is filled by Arg-157. Glu-220 acts as the Proton acceptor in catalysis. Position 266 (Glu-266) interacts with Fe(2+). Arg-269 provides a ligand contact to a (Z)-N-(sulfonatooxy)alkanimidothioate. Positions 270 and 274 each coordinate Fe(2+). Residues Trp-309 and Val-310 each coordinate a (Z)-N-(sulfonatooxy)alkanimidothioate.

In terms of assembly, homodimer. It depends on Fe(2+) as a cofactor. Expressed constitutively in roots, stems, leaves, flowers, siliques and seedlings.

The catalysed reaction is (Z)-N-(sulfonatooxy)prop-2-enimidothioate = allyl thiocyanate + sulfate. It catalyses the reaction (Z)-N-(sulfonatooxy)prop-2-enimidothioate = 2-(thiiran-2-yl)acetonitrile + sulfate. It carries out the reaction (Z)-N-(sulfonatooxy)prop-2-enimidothioate = allyl isothiocyanate + sulfate. The enzyme catalyses (Z)-phenyl-N-(sulfonatooxy)methanimidothioate = phenylacetonitrile + sulfur + sulfate. The catalysed reaction is glucoerucin + H2O = (Z)-4-methylsulfanylbutyl-N-(sulfonatooxy)methanimidothioate + D-glucose. It catalyses the reaction (Z)-4-methylsulfanylbutyl-N-(sulfonatooxy)methanimidothioate = 5-(methylsulfanyl)pentanenitrile + sulfur + sulfate + H(+). Its activity is regulated as follows. Stimulated by the presence of Fe(2+) leading to an increase formation of both thiocyanate and epithionitrile with allylglucosinolate as substrate in the presence of myrosinase. Repressed by EDTA. Its function is as follows. Specifier protein that contributes to constitutive and herbivore-induced simple nitrile formation. Catalyzes allylthiocyanate and corresponding epithionitrile formation from allylglucosinolate in the presence of myrosinase. Also converts aliphatic glucosinolates, such as indol-3-ylmethylglucosinolate, 4-methylsulfinylbutylglucosinolate, 4-methylthiobutyl- and benzylisothiocyanate, to simple nitriles. The polypeptide is N-(sulfonatooxy)prop-2-enimidothioate sulfolyase (Thlaspi arvense (Field penny-cress)).